We begin with the raw amino-acid sequence, 306 residues long: Probable arylamine N-acetyltransferase 3 (306 aa).

The active-site Acyl-thioester intermediate is the cysteine 75. Catalysis depends on residues histidine 115 and aspartate 130.

The protein belongs to the arylamine N-acetyltransferase family.

The enzyme catalyses an arylamine + acetyl-CoA = an N-acetylarylamine + CoA. This chain is Probable arylamine N-acetyltransferase 3, found in Dictyostelium discoideum (Social amoeba).